The following is a 312-amino-acid chain: Malate dehydrogenase (312 aa).

Residues 7-13 and Asp-34 each bind NAD(+); that span reads GAAGGIG. 2 residues coordinate substrate: Arg-81 and Arg-87. NAD(+)-binding positions include Asn-94 and 117–119; that span reads ITN. 2 residues coordinate substrate: Asn-119 and Arg-153. Residue His-177 is the Proton acceptor of the active site. NAD(+) is bound at residue Met-227.

This sequence belongs to the LDH/MDH superfamily. MDH type 1 family. Homodimer.

The enzyme catalyses (S)-malate + NAD(+) = oxaloacetate + NADH + H(+). Functionally, catalyzes the reversible oxidation of malate to oxaloacetate. The chain is Malate dehydrogenase from Escherichia coli (strain ATCC 8739 / DSM 1576 / NBRC 3972 / NCIMB 8545 / WDCM 00012 / Crooks).